The following is a 455-amino-acid chain: Protein YmfN (455 aa).

This sequence belongs to the phage terminase family.

The chain is Protein YmfN (ymfN) from Escherichia coli (strain K12).